We begin with the raw amino-acid sequence, 161 residues long: Transcription elongation factor GreA (161 aa).

The stretch at 45–72 (NAEYHSAKEKLKLIDIQIAELNAVISKA) forms a coiled coil.

Belongs to the GreA/GreB family.

Its function is as follows. Necessary for efficient RNA polymerase transcription elongation past template-encoded arresting sites. The arresting sites in DNA have the property of trapping a certain fraction of elongating RNA polymerases that pass through, resulting in locked ternary complexes. Cleavage of the nascent transcript by cleavage factors such as GreA or GreB allows the resumption of elongation from the new 3'terminus. GreA releases sequences of 2 to 3 nucleotides. The polypeptide is Transcription elongation factor GreA (Aliarcobacter butzleri (strain RM4018) (Arcobacter butzleri)).